Consider the following 302-residue polypeptide: tRNA pseudouridine synthase B (302 aa).

Residue Asp-42 is the Nucleophile of the active site.

It belongs to the pseudouridine synthase TruB family. Type 1 subfamily.

The catalysed reaction is uridine(55) in tRNA = pseudouridine(55) in tRNA. Functionally, responsible for synthesis of pseudouridine from uracil-55 in the psi GC loop of transfer RNAs. The polypeptide is tRNA pseudouridine synthase B (Leifsonia xyli subsp. xyli (strain CTCB07)).